Here is a 110-residue protein sequence, read N- to C-terminus: Waprin-Thr1 (110 aa).

The N-terminal stretch at 1–20 is a signal peptide; it reads MYKKGTILVLAYLLIATAVC. One can recognise a WAP domain in the interval 22-68; that stretch reads LSYKEGHCPLRNSVSKCIPRCVSDYQCSFNEKCCPNKCGSESCVQAS. Disulfide bonds link C29-C55, C38-C59, C42-C54, and C48-C64.

It belongs to the venom waprin family. Cys-rich waprin subfamily. In terms of tissue distribution, expressed by the venom gland.

The protein resides in the secreted. Its function is as follows. Antimicrobial peptides with activity against Gram-positive and Gram-negative bacteria as well as fungi. Recognizes carbohydrates in the microbial cell walls, and induces structural damage to them. Also inhibits microbial serine proteases subtilisin A and proteinase K, as well as human and porcine elastases. Carbohydrates that are recognized are LPS, mannan, peptidoglycan, and N-acetl-D-glucosamine. This Apis mellifera (Honeybee) protein is Waprin-Thr1.